The primary structure comprises 480 residues: Chromosomal replication initiator protein DnaA (480 aa).

The domain I, interacts with DnaA modulators stretch occupies residues 1 to 71; sequence MKEFWQTCVS…EALAAEWYQR (71 aa). Positions 71–142 are domain II; that stretch reads RPVQVTFELP…DAANIVYERS (72 aa). The tract at residues 143-359 is domain III, AAA+ region; the sequence is RLNTDLTFEN…GALRKVLAYA (217 aa). Gly187, Gly189, Lys190, and Thr191 together coordinate ATP. The interval 360–480 is domain IV, binds dsDNA; the sequence is RFHGRDVLTV…LHVLEQTLKG (121 aa).

This sequence belongs to the DnaA family. Oligomerizes as a right-handed, spiral filament on DNA at oriC.

The protein localises to the cytoplasm. Its function is as follows. Plays an essential role in the initiation and regulation of chromosomal replication. ATP-DnaA binds to the origin of replication (oriC) to initiate formation of the DNA replication initiation complex once per cell cycle. Binds the DnaA box (a 9 base pair repeat at the origin) and separates the double-stranded (ds)DNA. Forms a right-handed helical filament on oriC DNA; dsDNA binds to the exterior of the filament while single-stranded (ss)DNA is stabiized in the filament's interior. The ATP-DnaA-oriC complex binds and stabilizes one strand of the AT-rich DNA unwinding element (DUE), permitting loading of DNA polymerase. After initiation quickly degrades to an ADP-DnaA complex that is not apt for DNA replication. Binds acidic phospholipids. This chain is Chromosomal replication initiator protein DnaA, found in Bordetella bronchiseptica (strain ATCC BAA-588 / NCTC 13252 / RB50) (Alcaligenes bronchisepticus).